The following is a 432-amino-acid chain: Glutamyl-tRNA reductase (432 aa).

Residues 49–52, Ser-107, 112–114, and Gln-118 each bind substrate; these read TCNR and ETQ. Cys-50 serves as the catalytic Nucleophile. NADP(+) is bound at residue 186–191; that stretch reads GAGEMG.

Belongs to the glutamyl-tRNA reductase family. As to quaternary structure, homodimer.

The catalysed reaction is (S)-4-amino-5-oxopentanoate + tRNA(Glu) + NADP(+) = L-glutamyl-tRNA(Glu) + NADPH + H(+). It participates in porphyrin-containing compound metabolism; protoporphyrin-IX biosynthesis; 5-aminolevulinate from L-glutamyl-tRNA(Glu): step 1/2. Its function is as follows. Catalyzes the NADPH-dependent reduction of glutamyl-tRNA(Glu) to glutamate 1-semialdehyde (GSA). The chain is Glutamyl-tRNA reductase from Campylobacter jejuni (strain RM1221).